Here is a 473-residue protein sequence, read N- to C-terminus: Photosystem II CP43 reaction center protein (473 aa).

A propeptide spanning residues 1 to 14 is cleaved from the precursor; the sequence is MKTLYSLRRFYHVE. Threonine 15 bears the N-acetylthreonine mark. Threonine 15 is subject to Phosphothreonine. Transmembrane regions (helical) follow at residues 69-93, 134-155, 178-200, 255-275, and 291-312; these read LFEV…PHLA, LLGP…KDRN, KALY…RKIT, KPFA…LSYS, and WFNN…ASQA. Glutamate 367 is a binding site for [CaMn4O5] cluster. A helical transmembrane segment spans residues 447 to 471; that stretch reads RARAAAAGFEKGIDRDFEPVLSMTP.

The protein belongs to the PsbB/PsbC family. PsbC subfamily. In terms of assembly, PSII is composed of 1 copy each of membrane proteins PsbA, PsbB, PsbC, PsbD, PsbE, PsbF, PsbH, PsbI, PsbJ, PsbK, PsbL, PsbM, PsbT, PsbX, PsbY, PsbZ, Psb30/Ycf12, at least 3 peripheral proteins of the oxygen-evolving complex and a large number of cofactors. It forms dimeric complexes. Requires Binds multiple chlorophylls and provides some of the ligands for the Ca-4Mn-5O cluster of the oxygen-evolving complex. It may also provide a ligand for a Cl- that is required for oxygen evolution. PSII binds additional chlorophylls, carotenoids and specific lipids. as cofactor.

The protein resides in the plastid. The protein localises to the chloroplast thylakoid membrane. One of the components of the core complex of photosystem II (PSII). It binds chlorophyll and helps catalyze the primary light-induced photochemical processes of PSII. PSII is a light-driven water:plastoquinone oxidoreductase, using light energy to abstract electrons from H(2)O, generating O(2) and a proton gradient subsequently used for ATP formation. The sequence is that of Photosystem II CP43 reaction center protein from Ipomoea purpurea (Common morning glory).